The primary structure comprises 48 residues: uncharacterized protein (48 aa).

It localises to the plastid. Its subcellular location is the cyanelle. This is an uncharacterized protein from Cyanophora paradoxa.